A 75-amino-acid polypeptide reads, in one-letter code: Putative DNA-directed RNA polymerase subunit omega (75 aa).

It belongs to the RNA polymerase subunit omega family.

The protein resides in the plastid. The protein localises to the chloroplast. The catalysed reaction is RNA(n) + a ribonucleoside 5'-triphosphate = RNA(n+1) + diphosphate. Its function is as follows. May be involved in RNA polymerase activity. The polypeptide is Putative DNA-directed RNA polymerase subunit omega (Pyropia yezoensis (Susabi-nori)).